We begin with the raw amino-acid sequence, 523 residues long: 2-isopropylmalate synthase (523 aa).

The region spanning 5 to 267 (VIIFDTTLRD…ETGINAKEIH (263 aa)) is the Pyruvate carboxyltransferase domain. Residues Asp14, His202, His204, and Asn238 each contribute to the Mn(2+) site. Residues 392 to 523 (GLQQLVVHSD…KQARTELGGV (132 aa)) form a regulatory domain region.

Belongs to the alpha-IPM synthase/homocitrate synthase family. LeuA type 1 subfamily. Homodimer. The cofactor is Mn(2+).

It localises to the cytoplasm. It catalyses the reaction 3-methyl-2-oxobutanoate + acetyl-CoA + H2O = (2S)-2-isopropylmalate + CoA + H(+). Its pathway is amino-acid biosynthesis; L-leucine biosynthesis; L-leucine from 3-methyl-2-oxobutanoate: step 1/4. Functionally, catalyzes the condensation of the acetyl group of acetyl-CoA with 3-methyl-2-oxobutanoate (2-ketoisovalerate) to form 3-carboxy-3-hydroxy-4-methylpentanoate (2-isopropylmalate). In Shewanella loihica (strain ATCC BAA-1088 / PV-4), this protein is 2-isopropylmalate synthase.